The chain runs to 96 residues: SPAALQSSSFGSAGFGSTNFGSSGFGPSLGSTGFGSAGFASPGFGSPSLGSAAFGSSSFGSPSLGSTGFGSSSFGSTSGLPYLVVIPNNPAVGGLR.

A run of 9 repeats spans residues 11 to 15 (GSAGF), 16 to 20 (GSTNF), 21 to 25 (GSSGF), 30 to 34 (GSTGF), 35 to 39 (GSAGF), 50 to 54 (GSAAF), 55 to 59 (GSSSF), 65 to 69 (GSTGF), and 70 to 74 (GSSSF). Residues 11-74 (GSAGFGSTNF…GSTGFGSSSF (64 aa)) are 9 X 5 AA tandem repeat of G-S-X-X-F. The tract at residues 75–96 (GSTSGLPYLVVIPNNPAVGGLR) is disordered.

Post-translationally, the N-terminus is blocked. As to expression, expressed in the gastroliths.

The protein localises to the secreted. Functionally, associates with chitin and plays a role in calcification. The chain is Gastrolith matrix protein from Procambarus clarkii (Red swamp crayfish).